A 356-amino-acid polypeptide reads, in one-letter code: NF-kappa-B inhibitor beta (356 aa).

Ser-19 and Ser-23 each carry phosphoserine; by RPS6KA1. ANK repeat units follow at residues 57-86 (DGDT…GTEY), 93-122 (LGQT…GLCV), and 126-155 (RGHT…RRPR). Residues 149-193 (PRPRRPREAPDTYLAQGPDRTPDTNHTPVALYPDSDLEKEEEESE) form a disordered region. Position 183 is a phosphoserine (Ser-183). A compositionally biased stretch (acidic residues) spans 183–193 (SDLEKEEEESE). ANK repeat units follow at residues 206-235 (EGHT…DLDK), 240-269 (CGRS…NPAA), and 273-302 (GGRT…PEPE). Residues 298-356 (APEPEGEDEKSGPCSSSSDSDSGDEGDEYDDIVVHSSRSQTRLPPTPASKPLPDDPRPV) form a disordered region. 2 positions are modified to phosphoserine; by CK2: Ser-313 and Ser-315. The segment covering 318 to 328 (DSGDEGDEYDD) has biased composition (acidic residues).

The protein belongs to the NF-kappa-B inhibitor family. Interacts with THRB (via ligand-binding domain). Interacts with RELA and REL. Interacts with COMMD1. Interacts with inhibitor kappa B-interacting Ras-like NKIRAS1 and NKIRAS2. Phosphorylated by RPS6KA1; followed by degradation. Interaction with NKIRAS1 and NKIRAS2 probably prevents phosphorylation. Expressed in all tissues examined.

It is found in the cytoplasm. The protein resides in the nucleus. In terms of biological role, inhibits NF-kappa-B by complexing with and trapping it in the cytoplasm. However, the unphosphorylated form resynthesized after cell stimulation is able to bind NF-kappa-B allowing its transport to the nucleus and protecting it to further NFKBIA-dependent inactivation. Association with inhibitor kappa B-interacting NKIRAS1 and NKIRAS2 prevent its phosphorylation rendering it more resistant to degradation, explaining its slower degradation. This is NF-kappa-B inhibitor beta (NFKBIB) from Homo sapiens (Human).